We begin with the raw amino-acid sequence, 143 residues long: Deoxyuridine 5'-triphosphate nucleotidohydrolase (143 aa).

This sequence belongs to the dUTPase family. It depends on Mg(2+) as a cofactor.

It catalyses the reaction dUTP + H2O = dUMP + diphosphate + H(+). Its function is as follows. This enzyme is involved in nucleotide metabolism: it produces dUMP, the immediate precursor of thymidine nucleotides and it decreases the intracellular concentration of dUTP so that uracil cannot be incorporated into DNA. This Yaba monkey tumor virus (strain VR587) (YMTV) protein is Deoxyuridine 5'-triphosphate nucleotidohydrolase (DUT).